Consider the following 524-residue polypeptide: Alkaline phosphatase, tissue-nonspecific isozyme (524 aa).

An N-terminal signal peptide occupies residues 1–17 (MILPFLVLAIGTCLTNS). Asp60 contacts Mg(2+). Zn(2+) contacts are provided by Asp60 and Ser110. Ser110 (phosphoserine intermediate) is an active-site residue. Phosphoserine is present on Ser110. A disulfide bridge links Cys139 with Cys201. The N-linked (GlcNAc...) asparagine glycan is linked to Asn140. Residue Thr173 participates in Mg(2+) binding. Asn230 carries an N-linked (GlcNAc...) asparagine glycan. Glu235 is a binding site for Ca(2+). N-linked (GlcNAc...) asparagine glycosylation occurs at Asn271. The Ca(2+) site is built by Phe290 and Glu291. N-linked (GlcNAc...) asparagine glycosylation is present at Asn303. Asp306 serves as a coordination point for Ca(2+). Glu332 is a Mg(2+) binding site. Residues Asp337, His341, Asp378, and His379 each contribute to the Zn(2+) site. Asn430 carries N-linked (GlcNAc...) asparagine glycosylation. His454 contacts Zn(2+). The cysteines at positions 489 and 497 are disulfide-linked. Ser501 is lipidated: GPI-anchor amidated serine. A propeptide spans 502 to 524 (SASSPSPGALLLPLALFPLRTLF) (removed in mature form).

This sequence belongs to the alkaline phosphatase family. As to quaternary structure, homodimer. The cofactor is Mg(2+). Zn(2+) is required as a cofactor. Requires Ca(2+) as cofactor. In terms of processing, N-glycosylated.

The protein resides in the cell membrane. It is found in the extracellular vesicle membrane. The protein localises to the mitochondrion membrane. Its subcellular location is the mitochondrion intermembrane space. The enzyme catalyses a phosphate monoester + H2O = an alcohol + phosphate. The catalysed reaction is diphosphate + H2O = 2 phosphate + H(+). It carries out the reaction pyridoxal 5'-phosphate + H2O = pyridoxal + phosphate. It catalyses the reaction phosphoethanolamine + H2O = ethanolamine + phosphate. The enzyme catalyses N-phosphocreatine + H2O = creatine + phosphate. The catalysed reaction is ATP + H2O = ADP + phosphate + H(+). It carries out the reaction ADP + H2O = AMP + phosphate + H(+). It catalyses the reaction AMP + H2O = adenosine + phosphate. Phosphatase activity is specifically inhibited by 5-((5-chloro-2-methoxyphenyl)sulfonamido)nicotinamide (SBI-425). Functionally, alkaline phosphatase that metabolizes various phosphate compounds and plays a key role in skeletal mineralization and adaptive thermogenesis. Has broad substrate specificity and can hydrolyze a considerable variety of compounds: however, only a few substrates, such as diphosphate (inorganic pyrophosphate; PPi), pyridoxal 5'-phosphate (PLP) and N-phosphocreatine are natural substrates. Plays an essential role in skeletal and dental mineralization via its ability to hydrolyze extracellular diphosphate, a potent mineralization inhibitor, to phosphate: it thereby promotes hydroxyapatite crystal formation and increases inorganic phosphate concentration. Acts in a non-redundant manner with PHOSPHO1 in skeletal mineralization: while PHOSPHO1 mediates the initiation of hydroxyapatite crystallization in the matrix vesicles (MVs), ALPL/TNAP catalyzes the spread of hydroxyapatite crystallization in the extracellular matrix. Also promotes dephosphorylation of osteopontin (SSP1), an inhibitor of hydroxyapatite crystallization in its phosphorylated state; it is however unclear whether ALPL/TNAP mediates SSP1 dephosphorylation via a direct or indirect manner. Catalyzes dephosphorylation of PLP to pyridoxal (PL), the transportable form of vitamin B6, in order to provide a sufficient amount of PLP in the brain, an essential cofactor for enzymes catalyzing the synthesis of diverse neurotransmitters. Additionally, also able to mediate ATP degradation in a stepwise manner to adenosine, thereby regulating the availability of ligands for purinergic receptors. Also capable of dephosphorylating microbial products, such as lipopolysaccharides (LPS) as well as other phosphorylated small-molecules, such as poly-inosine:cytosine (poly I:C). Acts as a key regulator of adaptive thermogenesis as part of the futile creatine cycle: localizes to the mitochondria of thermogenic fat cells and acts by mediating hydrolysis of N-phosphocreatine to initiate a futile cycle of creatine dephosphorylation and phosphorylation. During the futile creatine cycle, creatine and N-phosphocreatine are in a futile cycle, which dissipates the high energy charge of N-phosphocreatine as heat without performing any mechanical or chemical work. This chain is Alkaline phosphatase, tissue-nonspecific isozyme (Alpl), found in Rattus norvegicus (Rat).